The chain runs to 361 residues: Phosphoserine aminotransferase (361 aa).

Arg-42 contributes to the L-glutamate binding site. Pyridoxal 5'-phosphate is bound by residues Ala-76 to Arg-77, Trp-102, Thr-153, Asp-173, and Gln-196. Lys-197 carries the N6-(pyridoxal phosphate)lysine modification. Asn-238 to Thr-239 contributes to the pyridoxal 5'-phosphate binding site.

It belongs to the class-V pyridoxal-phosphate-dependent aminotransferase family. SerC subfamily. In terms of assembly, homodimer. It depends on pyridoxal 5'-phosphate as a cofactor.

The protein resides in the cytoplasm. The enzyme catalyses O-phospho-L-serine + 2-oxoglutarate = 3-phosphooxypyruvate + L-glutamate. It carries out the reaction 4-(phosphooxy)-L-threonine + 2-oxoglutarate = (R)-3-hydroxy-2-oxo-4-phosphooxybutanoate + L-glutamate. Its pathway is amino-acid biosynthesis; L-serine biosynthesis; L-serine from 3-phospho-D-glycerate: step 2/3. The protein operates within cofactor biosynthesis; pyridoxine 5'-phosphate biosynthesis; pyridoxine 5'-phosphate from D-erythrose 4-phosphate: step 3/5. Catalyzes the reversible conversion of 3-phosphohydroxypyruvate to phosphoserine and of 3-hydroxy-2-oxo-4-phosphonooxybutanoate to phosphohydroxythreonine. This is Phosphoserine aminotransferase from Yersinia pseudotuberculosis serotype IB (strain PB1/+).